Reading from the N-terminus, the 201-residue chain is Ribosomal RNA small subunit methyltransferase G (201 aa).

S-adenosyl-L-methionine-binding positions include glycine 71, phenylalanine 76, 120–121 (LE), and arginine 134.

It belongs to the methyltransferase superfamily. RNA methyltransferase RsmG family.

The protein resides in the cytoplasm. It catalyses the reaction guanosine(527) in 16S rRNA + S-adenosyl-L-methionine = N(7)-methylguanosine(527) in 16S rRNA + S-adenosyl-L-homocysteine. In terms of biological role, specifically methylates the N7 position of guanine in position 527 of 16S rRNA. The sequence is that of Ribosomal RNA small subunit methyltransferase G from Rhodospirillum rubrum (strain ATCC 11170 / ATH 1.1.1 / DSM 467 / LMG 4362 / NCIMB 8255 / S1).